A 439-amino-acid chain; its full sequence is D-inositol 3-phosphate glycosyltransferase (439 aa).

A 1D-myo-inositol 3-phosphate-binding site is contributed by His21. Residues 27–28 (QP) and Gly35 contribute to the UDP-N-acetyl-alpha-D-glucosamine site. 1D-myo-inositol 3-phosphate is bound by residues 32–37 (DAGGMN), Lys90, Tyr123, Thr147, and Arg167. UDP-N-acetyl-alpha-D-glucosamine-binding residues include Arg241, Lys246, and Gln299. Residues Tyr308, Arg309, and Ala311 each coordinate Mg(2+). Residues Glu321 and Glu329 each coordinate UDP-N-acetyl-alpha-D-glucosamine. Thr335 provides a ligand contact to Mg(2+).

It belongs to the glycosyltransferase group 1 family. MshA subfamily. Homodimer.

It catalyses the reaction 1D-myo-inositol 3-phosphate + UDP-N-acetyl-alpha-D-glucosamine = 1D-myo-inositol 2-acetamido-2-deoxy-alpha-D-glucopyranoside 3-phosphate + UDP + H(+). Catalyzes the transfer of a N-acetyl-glucosamine moiety to 1D-myo-inositol 3-phosphate to produce 1D-myo-inositol 2-acetamido-2-deoxy-glucopyranoside 3-phosphate in the mycothiol biosynthesis pathway. This chain is D-inositol 3-phosphate glycosyltransferase, found in Mycobacterium sp. (strain JLS).